Reading from the N-terminus, the 130-residue chain is Small ribosomal subunit protein uS8 (130 aa).

It belongs to the universal ribosomal protein uS8 family. As to quaternary structure, part of the 30S ribosomal subunit. Contacts proteins S5 and S12.

In terms of biological role, one of the primary rRNA binding proteins, it binds directly to 16S rRNA central domain where it helps coordinate assembly of the platform of the 30S subunit. The sequence is that of Small ribosomal subunit protein uS8 from Buchnera aphidicola subsp. Schizaphis graminum (strain Sg).